Here is a 172-residue protein sequence, read N- to C-terminus: Small ribosomal subunit protein uS5 (172 aa).

The S5 DRBM domain occupies 17-80 (MREKMIAVNR…EECRRNLVKV (64 aa)).

It belongs to the universal ribosomal protein uS5 family. In terms of assembly, part of the 30S ribosomal subunit. Contacts proteins S4 and S8.

Its function is as follows. With S4 and S12 plays an important role in translational accuracy. Located at the back of the 30S subunit body where it stabilizes the conformation of the head with respect to the body. The sequence is that of Small ribosomal subunit protein uS5 from Paracidovorax citrulli (strain AAC00-1) (Acidovorax citrulli).